The chain runs to 146 residues: Ribosomal RNA large subunit methyltransferase H (146 aa).

S-adenosyl-L-methionine contacts are provided by residues leucine 68, glycine 95, and 114–119 (LSSLTF).

The protein belongs to the RNA methyltransferase RlmH family. Homodimer.

It is found in the cytoplasm. It catalyses the reaction pseudouridine(1915) in 23S rRNA + S-adenosyl-L-methionine = N(3)-methylpseudouridine(1915) in 23S rRNA + S-adenosyl-L-homocysteine + H(+). In terms of biological role, specifically methylates the pseudouridine at position 1915 (m3Psi1915) in 23S rRNA. This is Ribosomal RNA large subunit methyltransferase H from Thermodesulfovibrio yellowstonii (strain ATCC 51303 / DSM 11347 / YP87).